Here is a 276-residue protein sequence, read N- to C-terminus: Flagellin FljJ (276 aa).

The segment at 51–80 (RPGAGDMSGLAREDEPGSGDIDRGRGPRAG) is disordered. Residues 61–75 (AREDEPGSGDIDRGR) are compositionally biased toward basic and acidic residues.

It belongs to the bacterial flagellin family. In terms of assembly, in C.crescentus, the flagellar filament is composed of multiple flagellins of 29 kDa; 27 kDa and 25 kDa.

The protein resides in the secreted. The protein localises to the bacterial flagellum. Its function is as follows. Flagellin is the subunit protein which polymerizes to form the filaments of bacterial flagella. The chain is Flagellin FljJ (fljJ) from Caulobacter vibrioides (strain ATCC 19089 / CIP 103742 / CB 15) (Caulobacter crescentus).